We begin with the raw amino-acid sequence, 487 residues long: NADH-quinone oxidoreductase subunit N (487 aa).

Transmembrane regions (helical) follow at residues L8–I28, F35–V55, G78–Y98, E104–H124, L125–Y145, Y159–A179, I203–F223, P235–M255, L271–Q291, L297–Q317, I328–L348, A376–G396, L409–L428, and A451–I471.

This sequence belongs to the complex I subunit 2 family. In terms of assembly, NDH-1 is composed of 13 different subunits. Subunits NuoA, H, J, K, L, M, N constitute the membrane sector of the complex.

The protein resides in the cell inner membrane. It catalyses the reaction a quinone + NADH + 5 H(+)(in) = a quinol + NAD(+) + 4 H(+)(out). Its function is as follows. NDH-1 shuttles electrons from NADH, via FMN and iron-sulfur (Fe-S) centers, to quinones in the respiratory chain. The immediate electron acceptor for the enzyme in this species is believed to be ubiquinone. Couples the redox reaction to proton translocation (for every two electrons transferred, four hydrogen ions are translocated across the cytoplasmic membrane), and thus conserves the redox energy in a proton gradient. This Yersinia pseudotuberculosis serotype O:1b (strain IP 31758) protein is NADH-quinone oxidoreductase subunit N.